Here is a 569-residue protein sequence, read N- to C-terminus: Aspartic proteinase 3 (569 aa).

An N-terminal signal peptide occupies residues 1 to 21 (MKLKTVRSAVLSSLFASQVLG). The propeptide occupies 22-67 (KIIPAANKRDDDSNSKFVKLPFHKLYGDSLENVGSDKKPEVRLLKR). Residues 83 to 475 (YSVDLEVGTP…DLENLEISMA (393 aa)) enclose the Peptidase A1 domain. Asn-95 is a glycosylation site (N-linked (GlcNAc...) asparagine). The active site involves Asp-101. N-linked (GlcNAc...) asparagine glycosylation is found at Asn-203, Asn-232, Asn-242, Asn-245, Asn-299, and Asn-358. Asp-371 is a catalytic residue. 3 N-linked (GlcNAc...) asparagine glycosylation sites follow: Asn-480, Asn-522, and Asn-532. Asn-548 carries the GPI-anchor amidated asparagine lipid modification. A propeptide spans 549–569 (VGDHIVPSLPLTLISLLFAFI) (removed in mature form).

This sequence belongs to the peptidase A1 family. As to quaternary structure, consists of an alpha and a beta subunit, which are maintained together by a disulfide bond. In terms of processing, the zymogen is transported to the periplasm, where the propeptide is removed and the enzyme is further subjected to an internal, autocatalytic cleavage to generate an alpha/beta two-subunit endopeptidase. The proteolytic processing at the cell surface is regulated by the environmental pH. Extensively N-glycosylated.

It is found in the cell membrane. It catalyses the reaction Hydrolyzes various precursor proteins with Arg or Lys in P1, and commonly Arg or Lys also in P2. The P3 amino acid is usually non-polar, but otherwise additional basic amino acids are favorable in both non-prime and prime positions.. In terms of biological role, cleaves proteins C-terminally to mono- and paired-basic residues. Involved in the shedding of a subset of GPI-anchored plasma membrane proteins from the cell surface, including itself, GAS1 and MSB2. May also play a role in the maturation of GPI-mannoproteins associated with the cell wall. Can process the alpha-mating factor precursor. Required for cell wall integrity. This chain is Aspartic proteinase 3 (YPS1), found in Saccharomyces cerevisiae (strain ATCC 204508 / S288c) (Baker's yeast).